The sequence spans 559 residues: MSSILFNRRWASVLLEALTRHGVHHVCIAPGSRSTPLTMAAASHPRLHSHTHFDERGLGHLALGLAKVSGQPVAVIVTSGTAVANLYPALIEAGLTGERLILLTADRPPELIDCGANQAIRQQNMFASHPTETLSLPRPTPDISAAWLVSSIDSAMARLDHGALHINCPFADPLYGEDDDGQQGWSAALGCWWQGETPWLQESSPYTGALRAEVDWAQWRRRRGVVLIGRVDAEAGRQAAAWGEELGWPVLGDVLSQSGQPLPCADLWLPHAEARRLLAQAEIVVQFGASLTGKRLLQWQAACKPQRYWLIDPLPGRLDPACHRGRRLVAPVQAWLQAHPAQPAAPWAPQLKVLAGRAAQCVEQTLQASFGEAQVAHRLAQLLPLRGQLFVGNSLIVRLVDALGQLPAGYPVYSNRGASGIDGLVSTIAGVQRGSGLPTLAILGDLSALYDINGLALLRQVTAPTVVIVVNNNGGQIFSMLPTPPAERERFYLMPQNVDFRHAAALFDLDYACPVDWAALTDAVSQGWRRCGTTLIELRVPGTAGAEALQQLLGKVAAL.

This sequence belongs to the TPP enzyme family. MenD subfamily. As to quaternary structure, homodimer. It depends on Mg(2+) as a cofactor. Mn(2+) is required as a cofactor. Requires thiamine diphosphate as cofactor.

It carries out the reaction isochorismate + 2-oxoglutarate + H(+) = 5-enolpyruvoyl-6-hydroxy-2-succinyl-cyclohex-3-ene-1-carboxylate + CO2. It functions in the pathway quinol/quinone metabolism; 1,4-dihydroxy-2-naphthoate biosynthesis; 1,4-dihydroxy-2-naphthoate from chorismate: step 2/7. Its pathway is quinol/quinone metabolism; menaquinone biosynthesis. Functionally, catalyzes the thiamine diphosphate-dependent decarboxylation of 2-oxoglutarate and the subsequent addition of the resulting succinic semialdehyde-thiamine pyrophosphate anion to isochorismate to yield 2-succinyl-5-enolpyruvyl-6-hydroxy-3-cyclohexene-1-carboxylate (SEPHCHC). This is 2-succinyl-5-enolpyruvyl-6-hydroxy-3-cyclohexene-1-carboxylate synthase from Edwardsiella ictaluri (strain 93-146).